Consider the following 193-residue polypeptide: Pyridoxal 5'-phosphate synthase subunit PdxT (193 aa).

48–50 serves as a coordination point for L-glutamine; that stretch reads GES. Cys-80 acts as the Nucleophile in catalysis. L-glutamine-binding positions include Arg-109 and 137-138; that span reads IR. Catalysis depends on charge relay system residues His-173 and Glu-175.

Belongs to the glutaminase PdxT/SNO family. In the presence of PdxS, forms a dodecamer of heterodimers. Only shows activity in the heterodimer.

The enzyme catalyses aldehydo-D-ribose 5-phosphate + D-glyceraldehyde 3-phosphate + L-glutamine = pyridoxal 5'-phosphate + L-glutamate + phosphate + 3 H2O + H(+). The catalysed reaction is L-glutamine + H2O = L-glutamate + NH4(+). The protein operates within cofactor biosynthesis; pyridoxal 5'-phosphate biosynthesis. Catalyzes the hydrolysis of glutamine to glutamate and ammonia as part of the biosynthesis of pyridoxal 5'-phosphate. The resulting ammonia molecule is channeled to the active site of PdxS. In Mycobacteroides abscessus (strain ATCC 19977 / DSM 44196 / CCUG 20993 / CIP 104536 / JCM 13569 / NCTC 13031 / TMC 1543 / L948) (Mycobacterium abscessus), this protein is Pyridoxal 5'-phosphate synthase subunit PdxT.